A 195-amino-acid chain; its full sequence is Imidazoleglycerol-phosphate dehydratase (195 aa).

This sequence belongs to the imidazoleglycerol-phosphate dehydratase family.

The protein resides in the cytoplasm. It catalyses the reaction D-erythro-1-(imidazol-4-yl)glycerol 3-phosphate = 3-(imidazol-4-yl)-2-oxopropyl phosphate + H2O. It participates in amino-acid biosynthesis; L-histidine biosynthesis; L-histidine from 5-phospho-alpha-D-ribose 1-diphosphate: step 6/9. The protein is Imidazoleglycerol-phosphate dehydratase of Pelotomaculum thermopropionicum (strain DSM 13744 / JCM 10971 / SI).